We begin with the raw amino-acid sequence, 211 residues long: uncharacterized protein (211 aa).

Belongs to the nucleoside deoxyribosyltransferase family.

It localises to the cytoplasm. The protein resides in the nucleus. This is an uncharacterized protein from Schizosaccharomyces pombe (strain 972 / ATCC 24843) (Fission yeast).